A 425-amino-acid polypeptide reads, in one-letter code: Enolase (425 aa).

Position 161 (Gln161) interacts with (2R)-2-phosphoglycerate. The Proton donor role is filled by Glu203. Mg(2+) contacts are provided by Asp240, Glu283, and Asp310. Positions 335, 364, 365, and 386 each coordinate (2R)-2-phosphoglycerate. The active-site Proton acceptor is the Lys335.

This sequence belongs to the enolase family. Component of the RNA degradosome, a multiprotein complex involved in RNA processing and mRNA degradation. It depends on Mg(2+) as a cofactor.

It localises to the cytoplasm. The protein localises to the secreted. It is found in the cell surface. It carries out the reaction (2R)-2-phosphoglycerate = phosphoenolpyruvate + H2O. Its pathway is carbohydrate degradation; glycolysis; pyruvate from D-glyceraldehyde 3-phosphate: step 4/5. In terms of biological role, catalyzes the reversible conversion of 2-phosphoglycerate (2-PG) into phosphoenolpyruvate (PEP). It is essential for the degradation of carbohydrates via glycolysis. This chain is Enolase, found in Ruthia magnifica subsp. Calyptogena magnifica.